Here is a 389-residue protein sequence, read N- to C-terminus: Aminomethyltransferase (389 aa).

This sequence belongs to the GcvT family. In terms of assembly, the glycine cleavage system is composed of four proteins: P, T, L and H.

It catalyses the reaction N(6)-[(R)-S(8)-aminomethyldihydrolipoyl]-L-lysyl-[protein] + (6S)-5,6,7,8-tetrahydrofolate = N(6)-[(R)-dihydrolipoyl]-L-lysyl-[protein] + (6R)-5,10-methylene-5,6,7,8-tetrahydrofolate + NH4(+). Functionally, the glycine cleavage system catalyzes the degradation of glycine. The chain is Aminomethyltransferase from Corynebacterium jeikeium (strain K411).